We begin with the raw amino-acid sequence, 196 residues long: DnaA initiator-associating protein DiaA (196 aa).

The region spanning 34-196 (LVQSLLNGNK…DNTLFPHQDD (163 aa)) is the SIS domain.

Belongs to the SIS family. DiaA subfamily. In terms of assembly, homotetramer; dimer of dimers.

Required for the timely initiation of chromosomal replication via direct interactions with the DnaA initiator protein. The protein is DnaA initiator-associating protein DiaA of Yersinia enterocolitica serotype O:8 / biotype 1B (strain NCTC 13174 / 8081).